Here is a 275-residue protein sequence, read N- to C-terminus: 2-C-methyl-D-erythritol 4-phosphate cytidylyltransferase (275 aa).

The protein belongs to the IspD/TarI cytidylyltransferase family. IspD subfamily.

It catalyses the reaction 2-C-methyl-D-erythritol 4-phosphate + CTP + H(+) = 4-CDP-2-C-methyl-D-erythritol + diphosphate. The protein operates within isoprenoid biosynthesis; isopentenyl diphosphate biosynthesis via DXP pathway; isopentenyl diphosphate from 1-deoxy-D-xylulose 5-phosphate: step 2/6. In terms of biological role, catalyzes the formation of 4-diphosphocytidyl-2-C-methyl-D-erythritol from CTP and 2-C-methyl-D-erythritol 4-phosphate (MEP). The protein is 2-C-methyl-D-erythritol 4-phosphate cytidylyltransferase of Corynebacterium jeikeium (strain K411).